The chain runs to 295 residues: Taste receptor type 2 member 120 (295 aa).

Residues 1-5 (MNLVE) are Extracellular-facing. The chain crosses the membrane as a helical span at residues 6–26 (WIVTIIMMTEFLLGNCANVFI). Residues 27-45 (TIVNFIDCVKRRKISSADR) lie on the Cytoplasmic side of the membrane. A helical transmembrane segment spans residues 46 to 66 (IITAIAIFRIGLLWAMLTNWH). The Extracellular portion of the chain corresponds to 67-80 (SHVFTPDTDNLQMR). A helical transmembrane segment spans residues 81-101 (VFGGITWAITNHFTTWLGTIL). At 102–127 (SMFYLFKIANFSNSLFLHLKRKLDNV) the chain is on the cytoplasmic side. A helical transmembrane segment spans residues 128–148 (LLVIFLGSSLFLVAYLGMVNI). At 149–177 (KKIAWMSIHEGNVTTKSKLKHVTSITNML) the chain is on the extracellular side. The N-linked (GlcNAc...) asparagine glycan is linked to Asn160. A helical membrane pass occupies residues 178–198 (LFSLINIVPFGISLNCVLLLI). Over 199–228 (YSLSKHLKNMKFYGKGCQDQSTMVHIKALQ) the chain is Cytoplasmic. The helical transmembrane segment at 229–249 (TVVSFLLLYATYSSCVIISGW) threads the bilayer. The Extracellular segment spans residues 250–255 (SLQNAP). The helical transmembrane segment at 256 to 276 (VFLFCVTIGSFYPAGHSCILI) threads the bilayer. Topologically, residues 277-295 (WGNQKLKQVFLLLLRQMRC) are cytoplasmic.

This sequence belongs to the G-protein coupled receptor T2R family.

Its subcellular location is the membrane. Functionally, putative taste receptor which may play a role in the perception of bitterness. This chain is Taste receptor type 2 member 120, found in Mus musculus (Mouse).